The chain runs to 971 residues: MELNDANLQTLTEFLRKTLDPDPTVRRPAEKFLESVEGNQNYPLLLLTLLEKSQDNVIRVCAAVTFKNYIKRNWRIVEDEPNKISDPDRTAVKANIVNLMLSSPEQIQKQLSDAISIIGREDFPQKWPDLLTEMVARFRSGDFHIINGVLRTAHSLFKRYRHEFKSNELWSEIKLVLDTFALPLTELFKATIELCQTHATDVNALKVLFSSLTLIAKLFYSLNFQDLPEFFEDNMETWMTNFHGLLTLDNKLLQTDDEEEAGLLELLKSQICDNAALYAQKYDEEFQPYLPRFVTAIWNLLVSTGQEVKYDLLVSNAIQFLASVCERPHYKHLFEDQNTLTSICEKVIVPNMEFRSADEEAFEDNSEEYIRRDLEGSDIDTRRRAACDLVRGLCKFFEGPVTAIFSGYVNSMLSEYAKNPRENWKHKDAAIYLVTSLASKAQTQKHGITQANELVNLTEFFVNHILPDLKSPNVNEFPVLKADAIKYVMIFRSQLPKEQLLQAVPLLITHLQAESTVEHTYAAHALERLFTMRGPNNATLITAAEMAPFTEQLLNNLFKALAFPGSAENEYIMKAIMRSFSLLQESIVPYIPTLIGQLTHKLLQVSKNPSKPHFNHYLFESLCLSVRITCKANPTTVSSFEEALFPVFTEILQNDVQEFLPYVFQVMSLLLEIHSNSIPASYMALFPHLLQPVLWERTGNIPPLVRLLQAYLEKGGETIARSAADKIPGLLGVFQKLIASKANDHQGFYLLNSIIEHMPPESLTQYRKQIFILLFQRLQSSKTTKFIKSFLVFVNLYCVKYGAIALQEIFDSIQPKMFGMVLEKIVIPEVQKVSGPVEKKICAVGITKVLTECPAMMDTEYTKLWTPLLQALIGLFELPEDDSIPDDEHFIDIEDTPGYQTAFSQLAFAGKKEHDPIGDAVGNPKILLAQSLHKLSTACPGRVPSMLSTSLNAEALQFLQGYLQAATVQLV.

In terms of domain architecture, Importin N-terminal spans 29–102; sequence AEKFLESVEG…KANIVNLMLS (74 aa).

This sequence belongs to the XPO2/CSE1 family. As to quaternary structure, interacts with cftr.

Its subcellular location is the cytoplasm. It localises to the nucleus. In terms of biological role, export receptor for importin alpha. Mediates importin-alpha re-export from the nucleus to the cytoplasm after import substrates have been released into the nucleoplasm. Negatively regulates fluid secretion and plays a role in fluid homeostasis by down-regulating cftr activity. This is Exportin-2 (cse1l) from Oreochromis niloticus (Nile tilapia).